The sequence spans 719 residues: 1,4-alpha-glucan branching enzyme GlgB (719 aa).

Aspartate 400 acts as the Nucleophile in catalysis. The active-site Proton donor is the glutamate 453.

This sequence belongs to the glycosyl hydrolase 13 family. GlgB subfamily. Monomer.

It carries out the reaction Transfers a segment of a (1-&gt;4)-alpha-D-glucan chain to a primary hydroxy group in a similar glucan chain.. It participates in glycan biosynthesis; glycogen biosynthesis. Its function is as follows. Catalyzes the formation of the alpha-1,6-glucosidic linkages in glycogen by scission of a 1,4-alpha-linked oligosaccharide from growing alpha-1,4-glucan chains and the subsequent attachment of the oligosaccharide to the alpha-1,6 position. In Chlamydia caviae (strain ATCC VR-813 / DSM 19441 / 03DC25 / GPIC) (Chlamydophila caviae), this protein is 1,4-alpha-glucan branching enzyme GlgB.